The chain runs to 31 residues: Glucagon-3 (31 aa).

It belongs to the glucagon family.

It is found in the secreted. Functionally, glucagon plays a key role in glucose metabolism and homeostasis. Regulates blood glucose by increasing gluconeogenesis and decreasing glycolysis. This Huso dauricus (Kaluga sturgeon) protein is Glucagon-3.